A 305-amino-acid polypeptide reads, in one-letter code: Ornithine carbamoyltransferase (305 aa).

Carbamoyl phosphate is bound by residues 50-53, Q77, R101, and 128-131; these read STRT and HPCQ. L-ornithine contacts are provided by residues N162, D220, and 224–225; that span reads SM. Residues 260–261 and R288 each bind carbamoyl phosphate; that span reads CL.

The protein belongs to the aspartate/ornithine carbamoyltransferase superfamily. OTCase family.

The protein localises to the cytoplasm. It catalyses the reaction carbamoyl phosphate + L-ornithine = L-citrulline + phosphate + H(+). It participates in amino-acid degradation; L-arginine degradation via ADI pathway; carbamoyl phosphate from L-arginine: step 2/2. In terms of biological role, reversibly catalyzes the transfer of the carbamoyl group from carbamoyl phosphate (CP) to the N(epsilon) atom of ornithine (ORN) to produce L-citrulline. In Akkermansia muciniphila (strain ATCC BAA-835 / DSM 22959 / JCM 33894 / BCRC 81048 / CCUG 64013 / CIP 107961 / Muc), this protein is Ornithine carbamoyltransferase.